Here is a 321-residue protein sequence, read N- to C-terminus: MISGSVRFLVNLESLNGVESIGNLTKHRTAPVVLKTSTGYLVRYVPVISGEALAHAYQASLVDIAKKEGLPVGSLSSQYEFIKFSTDEALKIEGIKEPKDYNDARRFEVEVMLKDVIADVGGFMYAGGAPVRRTSRIKLGYMIPALRGDEIPAQLEAQFHVRFSNKPVSGSQAIFNVEVSSALYTFSFELDEDLIAVPSTFGEKVKGEEELERQKAKRVKSAIKALYSLLSGNFGGKRSRFLPSMKLMSLVVTKTDFPFMPEPAHDDDYIKTTIMRLGKAKGVLNGNLAKAYVINNEGIEVGEGVTVLSTVEDLVVKLEEE.

This sequence belongs to the CRISPR-associated protein Cas7/Cst2/DevR family. Subtype I-a/Apern subfamily. Part of the aCascade ribonucleoprotein complex, minimally composed of Csa2 and Cas5a, which binds crRNA. Other possible components of aCascade in strain P1 are Cas6b (SSO1437) and Csa5 (SSO1443), while SSO1399, Cas5b (SSO1400) and SSO1401 have sometimes been seen weakly associated. Csa2 is probably the major RNA-binding subunit. The Csa2-Cas5a-crRNA complex also binds target DNA homologous to crRNA, probably forming an R-loop. Purified aCascade forms a filament about 6 nm in width.

Its function is as follows. CRISPR (clustered regularly interspaced short palindromic repeat) is an adaptive immune system that provides protection against mobile genetic elements (viruses, transposable elements and conjugative plasmids). CRISPR clusters contain spacers, sequences complementary to antecedent mobile elements, and target invading nucleic acids. CRISPR clusters are transcribed and processed into CRISPR RNA (crRNA). This Saccharolobus solfataricus (strain ATCC 35092 / DSM 1617 / JCM 11322 / P2) (Sulfolobus solfataricus) protein is CRISPR-associated aCascade subunit Cas7/Csa2 2 (csa2b).